Here is a 488-residue protein sequence, read N- to C-terminus: Glutamyl-tRNA(Gln) amidotransferase subunit A (488 aa).

Catalysis depends on charge relay system residues Lys-76 and Ser-152. Residue Ser-176 is the Acyl-ester intermediate of the active site.

It belongs to the amidase family. GatA subfamily. As to quaternary structure, heterotrimer of A, B and C subunits.

It catalyses the reaction L-glutamyl-tRNA(Gln) + L-glutamine + ATP + H2O = L-glutaminyl-tRNA(Gln) + L-glutamate + ADP + phosphate + H(+). In terms of biological role, allows the formation of correctly charged Gln-tRNA(Gln) through the transamidation of misacylated Glu-tRNA(Gln) in organisms which lack glutaminyl-tRNA synthetase. The reaction takes place in the presence of glutamine and ATP through an activated gamma-phospho-Glu-tRNA(Gln). This is Glutamyl-tRNA(Gln) amidotransferase subunit A from Oceanobacillus iheyensis (strain DSM 14371 / CIP 107618 / JCM 11309 / KCTC 3954 / HTE831).